The following is a 303-amino-acid chain: tRNA pseudouridine synthase B (303 aa).

Asp47 functions as the Nucleophile in the catalytic mechanism.

The protein belongs to the pseudouridine synthase TruB family. Type 1 subfamily.

It carries out the reaction uridine(55) in tRNA = pseudouridine(55) in tRNA. In terms of biological role, responsible for synthesis of pseudouridine from uracil-55 in the psi GC loop of transfer RNAs. The chain is tRNA pseudouridine synthase B from Legionella pneumophila subsp. pneumophila (strain Philadelphia 1 / ATCC 33152 / DSM 7513).